A 92-amino-acid polypeptide reads, in one-letter code: Cell division topological specificity factor (92 aa).

Belongs to the MinE family.

In terms of biological role, prevents the cell division inhibition by proteins MinC and MinD at internal division sites while permitting inhibition at polar sites. This ensures cell division at the proper site by restricting the formation of a division septum at the midpoint of the long axis of the cell. In Desulforamulus reducens (strain ATCC BAA-1160 / DSM 100696 / MI-1) (Desulfotomaculum reducens), this protein is Cell division topological specificity factor.